The sequence spans 412 residues: Phosphoglycerate kinase 1 (412 aa).

Residues 28-30, 65-68, R122, and R162 contribute to the substrate site; these read DFN and HQGR. ATP contacts are provided by residues E336 and 361 to 364; that span reads GGHT.

It belongs to the phosphoglycerate kinase family. Monomer.

It localises to the cytoplasm. It carries out the reaction (2R)-3-phosphoglycerate + ATP = (2R)-3-phospho-glyceroyl phosphate + ADP. The protein operates within carbohydrate degradation; glycolysis; pyruvate from D-glyceraldehyde 3-phosphate: step 2/5. In Methanosarcina acetivorans (strain ATCC 35395 / DSM 2834 / JCM 12185 / C2A), this protein is Phosphoglycerate kinase 1.